The primary structure comprises 207 residues: Protein GrpE (207 aa).

2 stretches are compositionally biased toward basic and acidic residues: residues 1–11 and 57–66; these read MEENRDVKNEE and DLVKNQEEEN. A disordered region spans residues 1-66; it reads MEENRDVKNE…DLVKNQEEEN (66 aa).

This sequence belongs to the GrpE family. As to quaternary structure, homodimer.

It localises to the cytoplasm. Its function is as follows. Participates actively in the response to hyperosmotic and heat shock by preventing the aggregation of stress-denatured proteins, in association with DnaK and GrpE. It is the nucleotide exchange factor for DnaK and may function as a thermosensor. Unfolded proteins bind initially to DnaJ; upon interaction with the DnaJ-bound protein, DnaK hydrolyzes its bound ATP, resulting in the formation of a stable complex. GrpE releases ADP from DnaK; ATP binding to DnaK triggers the release of the substrate protein, thus completing the reaction cycle. Several rounds of ATP-dependent interactions between DnaJ, DnaK and GrpE are required for fully efficient folding. This is Protein GrpE from Clostridium beijerinckii (strain ATCC 51743 / NCIMB 8052) (Clostridium acetobutylicum).